Reading from the N-terminus, the 565-residue chain is Anaphase-promoting complex subunit 7 (565 aa).

TPR repeat units lie at residues 101 to 134, 169 to 202, 203 to 236, 237 to 270, 339 to 372, 373 to 406, 407 to 441, 442 to 474, 475 to 508, and 509 to 531; these read EIEV…RQRT, LDAI…LDWL, SVWI…LRDN, VDLL…DPYL, VQAL…APCR, LDCY…LGAN, AQTL…RPDY, IKAV…NQSD, CVLH…DPND, and QKSL…TQEE. K229 is subject to N6-acetyllysine. Positions 513–523 are enriched in basic and acidic residues; sequence EGMQKMEKEES. Residues 513–565 are disordered; sequence EGMQKMEKEESPTDATQEEDVDDMEGSGEEGDLEGSDSEAAQWADQEQWFGMQ. The segment covering 528–549 has biased composition (acidic residues); the sequence is TQEEDVDDMEGSGEEGDLEGSD.

The protein belongs to the APC7 family. In terms of assembly, V-shaped homodimer. The mammalian APC/C is composed at least of 14 distinct subunits ANAPC1, ANAPC2, CDC27/APC3, ANAPC4, ANAPC5, CDC16/APC6, ANAPC7, CDC23/APC8, ANAPC10, ANAPC11, CDC26/APC12, ANAPC13, ANAPC15 and ANAPC16 that assemble into a complex of at least 19 chains with a combined molecular mass of around 1.2 MDa; APC/C interacts with FZR1 and FBXO5.

The protein localises to the cytoplasm. It is found in the cytoskeleton. Its subcellular location is the nucleus. It localises to the spindle. It participates in protein modification; protein ubiquitination. Functionally, component of the anaphase promoting complex/cyclosome (APC/C), a cell cycle-regulated E3 ubiquitin ligase that controls progression through mitosis and the G1 phase of the cell cycle. The APC/C complex acts by mediating ubiquitination and subsequent degradation of target proteins: it mainly mediates the formation of 'Lys-11'-linked polyubiquitin chains and, to a lower extent, the formation of 'Lys-48'- and 'Lys-63'-linked polyubiquitin chains. The APC/C complex catalyzes assembly of branched 'Lys-11'-/'Lys-48'-linked branched ubiquitin chains on target proteins. APC7 is not required for the assembly of the APC/C complex, but has an enzyme-substrate adapter activity mediating the processive ubiquitination of specific substrates. Involved in brain development through the specific ubiquitination and clearance of MKI67 from constitutive heterochromatin after neuronal progenitors exit mitosis. This is Anaphase-promoting complex subunit 7 from Homo sapiens (Human).